The sequence spans 1111 residues: Histone deacetylase 5 (1111 aa).

Residue lysine 35 forms a Glycyl lysine isopeptide (Lys-Gly) (interchain with G-Cter in SUMO2) linkage. 3 disordered regions span residues 40 to 63 (GAMPSSMGGGGGGSPSPVELRGAL), 107 to 136 (RQHEVQLQKHLKQQQEMLAAKRQQELEQQR), and 187 to 272 (KEPT…SSPL). The span at 238–249 (DSRDDFPLRKTA) shows a compositional bias: basic and acidic residues. At serine 250 the chain carries Phosphoserine; by AMPK, CaMK1, SIK1 and PKD/PRKD1. The span at 263–272 (KVAERRSSPL) shows a compositional bias: basic and acidic residues. Threonine 283 bears the Phosphothreonine; by PKC mark. Residues 474–495 (TVGKLPRHRPLSRTQSSPLPQS) form a disordered region. Residues 485–495 (SRTQSSPLPQS) are compositionally biased toward low complexity. Serine 489 is modified (phosphoserine; by AMPK, CaMK1, SIK1 and PKD/PRKD1). An N6-acetyllysine modification is found at lysine 524. Disordered regions lie at residues 527–611 (TKTG…LEES) and 645–666 (LGRTQSSPAAPGSMKSPPDQPT). The segment covering 572–610 (STQEDLEEEEDEEEEDEDCIQVKDEEGESGPDEGPDLEE) has biased composition (acidic residues). 2 positions are modified to phosphoserine: serine 600 and serine 650. The histone deacetylase stretch occupies residues 671–1017 (TTGVVYDTFM…VSALLSVELQ (347 aa)). Cysteine 685, cysteine 687, histidine 693, and cysteine 770 together coordinate Zn(2+). Histidine 822 is an active-site residue. The Nuclear export signal motif lies at 1070–1109 (EEAETVSAMALLSVGAEQAQAVATQEHSPRPAEEPMEQEP). Positions 1086-1111 (EQAQAVATQEHSPRPAEEPMEQEPTL) are disordered. Phosphoserine is present on serine 1097.

Belongs to the histone deacetylase family. HD type 2 subfamily. In terms of assembly, interacts with AHRR, BAHD1, BCOR, HDAC7, HDAC9, CTBP1, MEF2C, NCOR2, NRIP1, PHB2 and a 14-3-3 chaperone protein. Interacts with BCL6, DDIT3/CHOP, GRK5, KDM5B and MYOCD. Interacts with EP300 in the presence of TFAP2C. Interacts with ANKRA2. Interacts with CUL7 (as part of the 3M complex); negatively regulated by ANKRA2. Interacts with ZBTB7B; the interaction allows the recruitment of HDAC4 on CD8 loci for deacetylation and possible inhibition of CD8 genes expression. Interacts with RARA. Phosphorylated by AMPK, CaMK1, SIK1 and PRKD1 at Ser-250 and Ser-489. The phosphorylation is required for the export to the cytoplasm and inhibition. Phosphorylated by the PKC kinases PKN1 and PKN2, impairing nuclear import. Phosphorylated by GRK5, leading to nuclear export of HDAC5 and allowing MEF2-mediated transcription. In terms of processing, ubiquitinated. Polyubiquitination however does not lead to its degradation.

The protein localises to the nucleus. The protein resides in the cytoplasm. It carries out the reaction N(6)-acetyl-L-lysyl-[histone] + H2O = L-lysyl-[histone] + acetate. Its function is as follows. Responsible for the deacetylation of lysine residues on the N-terminal part of the core histones (H2A, H2B, H3 and H4). Histone deacetylation gives a tag for epigenetic repression and plays an important role in transcriptional regulation, cell cycle progression and developmental events. Histone deacetylases act via the formation of large multiprotein complexes. Involved in muscle maturation by repressing transcription of myocyte enhancer MEF2C. During muscle differentiation, it shuttles into the cytoplasm, allowing the expression of myocyte enhancer factors. Serves as a corepressor of RARA and causes its deacetylation. In association with RARA, plays a role in the repression of microRNA-10a and thereby in the inflammatory response. This chain is Histone deacetylase 5 (HDAC5), found in Cricetulus griseus (Chinese hamster).